A 204-amino-acid chain; its full sequence is 8-oxoguanine DNA glycosylase/AP lyase (204 aa).

Catalysis depends on residues Lys-128 and Asp-146.

It belongs to the type-2 OGG1 family.

It carries out the reaction 2'-deoxyribonucleotide-(2'-deoxyribose 5'-phosphate)-2'-deoxyribonucleotide-DNA = a 3'-end 2'-deoxyribonucleotide-(2,3-dehydro-2,3-deoxyribose 5'-phosphate)-DNA + a 5'-end 5'-phospho-2'-deoxyribonucleoside-DNA + H(+). Functionally, catalyzes the excision of an oxidatively damaged form of guanine (7,8-dihydro-8-oxoguanine = 8-oxoG) from DNA. Also cleaves the DNA backbone at apurinic/apyrimidinic sites (AP sites). This Sulfurisphaera tokodaii (strain DSM 16993 / JCM 10545 / NBRC 100140 / 7) (Sulfolobus tokodaii) protein is 8-oxoguanine DNA glycosylase/AP lyase.